The primary structure comprises 289 residues: G1/S-specific cyclin-D2 (289 aa).

A Cyclin N-terminal domain is found at Leu26–Ala151. The disordered stretch occupies residues Gln264–Leu289. Residue Ser271 is modified to Phosphoserine. Phosphothreonine is present on Thr280.

The protein belongs to the cyclin family. Cyclin D subfamily. In terms of assembly, interacts with either CDK4 or CDK6 protein kinase to form a serine/threonine kinase holoenzyme complex. The cyclin subunit imparts substrate specificity to the complex. In terms of processing, phosphorylation at Thr-280 by MAP kinases is required for ubiquitination and degradation by the DCX(AMBRA1) complex. Post-translationally, ubiquitinated by the DCX(AMBRA1) complex during the transition from G1 to S cell phase, leading to its degradation: ubiquitination is dependent on Thr-280 phosphorylation. The DCX(AMBRA1) complex represents the major regulator of CCND2 stability during the G1/S transition. Polyubiquitinated by the SCF(FBXL2) complex, leading to proteasomal degradation.

It localises to the nucleus. It is found in the cytoplasm. The protein localises to the nucleus membrane. Regulatory component of the cyclin D2-CDK4 (DC) complex that phosphorylates and inhibits members of the retinoblastoma (RB) protein family including RB1 and regulates the cell-cycle during G(1)/S transition. Phosphorylation of RB1 allows dissociation of the transcription factor E2F from the RB/E2F complex and the subsequent transcription of E2F target genes which are responsible for the progression through the G(1) phase. Hypophosphorylates RB1 in early G(1) phase. Cyclin D-CDK4 complexes are major integrators of various mitogenenic and antimitogenic signals. This is G1/S-specific cyclin-D2 from Mus musculus (Mouse).